The sequence spans 493 residues: Lysine--tRNA ligase (493 aa).

Mg(2+)-binding residues include E402 and E409.

It belongs to the class-II aminoacyl-tRNA synthetase family. Homodimer. Mg(2+) serves as cofactor.

It is found in the cytoplasm. It carries out the reaction tRNA(Lys) + L-lysine + ATP = L-lysyl-tRNA(Lys) + AMP + diphosphate. This is Lysine--tRNA ligase from Ureaplasma parvum serovar 3 (strain ATCC 27815 / 27 / NCTC 11736).